The primary structure comprises 264 residues: Thymidylate synthase (264 aa).

Arginine 21 serves as a coordination point for dUMP. Histidine 51 contacts (6R)-5,10-methylene-5,6,7,8-tetrahydrofolate. 126 to 127 (RR) lines the dUMP pocket. The Nucleophile role is filled by cysteine 146. DUMP is bound by residues 166–169 (RSCD), asparagine 177, and 207–209 (HLY). Aspartate 169 serves as a coordination point for (6R)-5,10-methylene-5,6,7,8-tetrahydrofolate. Alanine 263 provides a ligand contact to (6R)-5,10-methylene-5,6,7,8-tetrahydrofolate.

Belongs to the thymidylate synthase family. Bacterial-type ThyA subfamily. In terms of assembly, homodimer.

The protein resides in the cytoplasm. It carries out the reaction dUMP + (6R)-5,10-methylene-5,6,7,8-tetrahydrofolate = 7,8-dihydrofolate + dTMP. Its pathway is pyrimidine metabolism; dTTP biosynthesis. Functionally, catalyzes the reductive methylation of 2'-deoxyuridine-5'-monophosphate (dUMP) to 2'-deoxythymidine-5'-monophosphate (dTMP) while utilizing 5,10-methylenetetrahydrofolate (mTHF) as the methyl donor and reductant in the reaction, yielding dihydrofolate (DHF) as a by-product. This enzymatic reaction provides an intracellular de novo source of dTMP, an essential precursor for DNA biosynthesis. This Shigella boydii serotype 4 (strain Sb227) protein is Thymidylate synthase.